Consider the following 226-residue polypeptide: 7-cyano-7-deazaguanine synthase (226 aa).

An ATP-binding site is contributed by 10 to 20; the sequence is LSGGLDSATAA. Positions 191, 199, 202, and 205 each coordinate Zn(2+).

It belongs to the QueC family. Zn(2+) is required as a cofactor.

The enzyme catalyses 7-carboxy-7-deazaguanine + NH4(+) + ATP = 7-cyano-7-deazaguanine + ADP + phosphate + H2O + H(+). The protein operates within purine metabolism; 7-cyano-7-deazaguanine biosynthesis. Functionally, catalyzes the ATP-dependent conversion of 7-carboxy-7-deazaguanine (CDG) to 7-cyano-7-deazaguanine (preQ(0)). This is 7-cyano-7-deazaguanine synthase from Parasynechococcus marenigrum (strain WH8102).